The chain runs to 512 residues: Bifunctional purine biosynthesis protein PurH (512 aa).

Positions 1 to 144 (MKRALVSVSD…KNYRDVVVVV (144 aa)) constitute an MGS-like domain.

This sequence belongs to the PurH family.

The catalysed reaction is (6R)-10-formyltetrahydrofolate + 5-amino-1-(5-phospho-beta-D-ribosyl)imidazole-4-carboxamide = 5-formamido-1-(5-phospho-D-ribosyl)imidazole-4-carboxamide + (6S)-5,6,7,8-tetrahydrofolate. The enzyme catalyses IMP + H2O = 5-formamido-1-(5-phospho-D-ribosyl)imidazole-4-carboxamide. Its pathway is purine metabolism; IMP biosynthesis via de novo pathway; 5-formamido-1-(5-phospho-D-ribosyl)imidazole-4-carboxamide from 5-amino-1-(5-phospho-D-ribosyl)imidazole-4-carboxamide (10-formyl THF route): step 1/1. It participates in purine metabolism; IMP biosynthesis via de novo pathway; IMP from 5-formamido-1-(5-phospho-D-ribosyl)imidazole-4-carboxamide: step 1/1. This Ligilactobacillus salivarius (strain UCC118) (Lactobacillus salivarius) protein is Bifunctional purine biosynthesis protein PurH.